The following is a 126-amino-acid chain: Glycine cleavage system H protein (126 aa).

Positions lysine 22 to glutamate 104 constitute a Lipoyl-binding domain. An N6-lipoyllysine modification is found at lysine 63.

It belongs to the GcvH family. The glycine cleavage system is composed of four proteins: P, T, L and H. The cofactor is (R)-lipoate.

Functionally, the glycine cleavage system catalyzes the degradation of glycine. The H protein shuttles the methylamine group of glycine from the P protein to the T protein. Is also involved in protein lipoylation via its role as an octanoyl/lipoyl carrier protein intermediate. The sequence is that of Glycine cleavage system H protein from Oceanobacillus iheyensis (strain DSM 14371 / CIP 107618 / JCM 11309 / KCTC 3954 / HTE831).